We begin with the raw amino-acid sequence, 277 residues long: Large ribosomal subunit protein uL2 (277 aa).

Positions 219–277 are disordered; it reads TVRGSVMNPNDHPHGGGEGKAPVGRKAPSTPWGKPALGLKTRNKKAKSDKLIVRRRNEK. The span at 264–277 shows a compositional bias: basic and acidic residues; sequence AKSDKLIVRRRNEK.

This sequence belongs to the universal ribosomal protein uL2 family. In terms of assembly, part of the 50S ribosomal subunit. Forms a bridge to the 30S subunit in the 70S ribosome.

Its function is as follows. One of the primary rRNA binding proteins. Required for association of the 30S and 50S subunits to form the 70S ribosome, for tRNA binding and peptide bond formation. It has been suggested to have peptidyltransferase activity; this is somewhat controversial. Makes several contacts with the 16S rRNA in the 70S ribosome. The polypeptide is Large ribosomal subunit protein uL2 (Streptococcus pneumoniae serotype 2 (strain D39 / NCTC 7466)).